Consider the following 366-residue polypeptide: Endophilin-A (366 aa).

Residues 18–248 (TEKMGGAEGT…LQEKRSEAES (231 aa)) enclose the BAR domain. The stretch at 227-247 (QCADVLRGLQETLQEKRSEAE) forms a coiled coil. The disordered stretch occupies residues 266–295 (GGGGGLNEDGTPSHISSSASPLPSPMRSPA). A compositionally biased stretch (low complexity) spans 277-294 (PSHISSSASPLPSPMRSP). An SH3 domain is found at 305–364 (QQQPCCQALYDFDPENPGELGFKENDIITLLNRVDDNWYEGSVNGRTGYFPQSYVQVQVP).

It belongs to the endophilin family.

It localises to the cytoplasm. The protein resides in the membrane. Its function is as follows. Required presynaptically at the neuromuscular junction. Implicated in synaptic vesicle endocytosis. This is Endophilin-A from Drosophila willistoni (Fruit fly).